The following is a 204-amino-acid chain: uncharacterized protein (204 aa).

Residues 1–10 are compositionally biased toward polar residues; that stretch reads MQQAITQQEK. 2 disordered regions span residues 1–20 and 70–99; these read MQQA…LPNR and DEAR…KNTE. In terms of domain architecture, SPOR spans 131–204; sequence VRDSKKFGLQ…TVTDCVVIGM (74 aa).

This sequence to E.coli FtsN repeat regions.

This is an uncharacterized protein from Haemophilus influenzae (strain ATCC 51907 / DSM 11121 / KW20 / Rd).